Consider the following 182-residue polypeptide: Probable inosine/xanthosine triphosphatase (182 aa).

Residue glutamate 65 participates in Mg(2+) binding. 65 to 66 (EA) contributes to the substrate binding site.

Belongs to the YjjX NTPase family. Homodimer. It depends on Mg(2+) as a cofactor. Requires Mn(2+) as cofactor.

The catalysed reaction is XTP + H2O = XDP + phosphate + H(+). The enzyme catalyses ITP + H2O = IDP + phosphate + H(+). In terms of biological role, phosphatase that hydrolyzes non-canonical purine nucleotides such as XTP and ITP to their respective diphosphate derivatives. Probably excludes non-canonical purines from DNA/RNA precursor pool, thus preventing their incorporation into DNA/RNA and avoiding chromosomal lesions. In Pyrobaculum neutrophilum (strain DSM 2338 / JCM 9278 / NBRC 100436 / V24Sta) (Thermoproteus neutrophilus), this protein is Probable inosine/xanthosine triphosphatase.